A 549-amino-acid polypeptide reads, in one-letter code: Cation/acetate symporter ActP (549 aa).

The next 13 helical transmembrane spans lie at 33–53, 77–97, 103–123, 148–168, 183–203, 206–226, 262–282, 303–323, 355–375, 404–424, 428–448, 464–484, and 493–513; these read WQAI…TYWA, LAIA…ALVF, GLIY…LIAE, ILSA…QMVG, IAVV…GMLA, WVQI…AFMV, ISAL…PHIL, GFMG…IMLV, LFLG…VAGL, VSKI…VLFE, IAFM…PIIL, GGWL…TIWV, and IFPY…GIWL.

The protein belongs to the sodium:solute symporter (SSF) (TC 2.A.21) family.

Its subcellular location is the cell inner membrane. Transports acetate. The chain is Cation/acetate symporter ActP from Escherichia coli O1:K1 / APEC.